The following is a 227-amino-acid chain: 7-cyano-7-deazaguanine synthase (227 aa).

8–18 (VSGGADSATVL) provides a ligand contact to ATP. Positions 192, 202, 205, and 208 each coordinate Zn(2+).

It belongs to the QueC family. Zn(2+) serves as cofactor.

The catalysed reaction is 7-carboxy-7-deazaguanine + NH4(+) + ATP = 7-cyano-7-deazaguanine + ADP + phosphate + H2O + H(+). It participates in purine metabolism; 7-cyano-7-deazaguanine biosynthesis. Its function is as follows. Catalyzes the ATP-dependent conversion of 7-carboxy-7-deazaguanine (CDG) to 7-cyano-7-deazaguanine (preQ(0)). This chain is 7-cyano-7-deazaguanine synthase, found in Rickettsia akari (strain Hartford).